The sequence spans 338 residues: Popeye domain-containing protein 1 (338 aa).

Residues 1–40 are Extracellular-facing; that stretch reads MATESILITTLPMDLNSQINNVTFGLNENETLCENWREIH. Asparagine 21 and asparagine 29 each carry an N-linked (GlcNAc...) asparagine glycan. The chain crosses the membrane as a helical span at residues 41-61; sequence HLVFHLANTCFAAGLVIPSTL. Over 62-65 the chain is Cytoplasmic; sequence NLHM. A helical membrane pass occupies residues 66–86; that stretch reads ILLRGMLCLGCIFFIIWAILF. Topologically, residues 87–91 are extracellular; that stretch reads RCALD. A helical transmembrane segment spans residues 92–112; that stretch reads IMIWNATFLSMNFMHFIYLVY. Residues 113–338 are Cytoplasmic-facing; that stretch reads KKRPIKIEKD…VGPLSHAVFC (226 aa).

This sequence belongs to the popeye family.

The protein resides in the lateral cell membrane. The protein localises to the cell junction. Its subcellular location is the tight junction. It is found in the membrane. It localises to the cell membrane. The protein resides in the sarcolemma. The protein localises to the caveola. Functionally, cell adhesion molecule involved in the establishment and/or maintenance of cell integrity. May play a role in vamp3-mediated vesicular transport and recycling of different receptor molecules. May be involved in the formation and regulation of the tight junction (TJ) paracellular permeability barrier in epithelial cells. May induce primordial adhesive contact and aggregation of epithelial cells in a Ca(2+)-independent manner. May be involved in epithelial movement during corneal sheet formation and regeneration. May play a role in the regulation of cell shape and movement by modulating the Rho-GTPase activity. May be involved in skeletal muscle and heart development as well as in the maintenance of heart function. May also be involved in striated muscle regeneration and in the regulation of cell spreading. The protein is Popeye domain-containing protein 1 (popdc1) of Xenopus tropicalis (Western clawed frog).